Consider the following 197-residue polypeptide: 7-methyl-GTP pyrophosphatase (197 aa).

Asp69 serves as the catalytic Proton acceptor.

Belongs to the Maf family. YceF subfamily. Requires a divalent metal cation as cofactor.

Its subcellular location is the cytoplasm. The enzyme catalyses N(7)-methyl-GTP + H2O = N(7)-methyl-GMP + diphosphate + H(+). In terms of biological role, nucleoside triphosphate pyrophosphatase that hydrolyzes 7-methyl-GTP (m(7)GTP). May have a dual role in cell division arrest and in preventing the incorporation of modified nucleotides into cellular nucleic acids. The sequence is that of 7-methyl-GTP pyrophosphatase from Syntrophotalea carbinolica (strain DSM 2380 / NBRC 103641 / GraBd1) (Pelobacter carbinolicus).